The following is a 273-amino-acid chain: Formamidopyrimidine-DNA glycosylase (273 aa).

P2 (schiff-base intermediate with DNA) is an active-site residue. E3 acts as the Proton donor in catalysis. Catalysis depends on K59, which acts as the Proton donor; for beta-elimination activity. Residues H93, R111, and R154 each contribute to the DNA site. The FPG-type zinc-finger motif lies at 239–273; sequence KVYGRGGEPCKECGHTLVRIRLAGRSTVFCPCCQV. The active-site Proton donor; for delta-elimination activity is the R263.

Belongs to the FPG family. As to quaternary structure, monomer. Requires Zn(2+) as cofactor.

The enzyme catalyses Hydrolysis of DNA containing ring-opened 7-methylguanine residues, releasing 2,6-diamino-4-hydroxy-5-(N-methyl)formamidopyrimidine.. The catalysed reaction is 2'-deoxyribonucleotide-(2'-deoxyribose 5'-phosphate)-2'-deoxyribonucleotide-DNA = a 3'-end 2'-deoxyribonucleotide-(2,3-dehydro-2,3-deoxyribose 5'-phosphate)-DNA + a 5'-end 5'-phospho-2'-deoxyribonucleoside-DNA + H(+). In terms of biological role, involved in base excision repair of DNA damaged by oxidation or by mutagenic agents. Acts as a DNA glycosylase that recognizes and removes damaged bases. Has a preference for oxidized purines, such as 7,8-dihydro-8-oxoguanine (8-oxoG). Has AP (apurinic/apyrimidinic) lyase activity and introduces nicks in the DNA strand. Cleaves the DNA backbone by beta-delta elimination to generate a single-strand break at the site of the removed base with both 3'- and 5'-phosphates. This Desulfitobacterium hafniense (strain DSM 10664 / DCB-2) protein is Formamidopyrimidine-DNA glycosylase.